We begin with the raw amino-acid sequence, 163 residues long: Protein-export protein SecB (163 aa).

The protein belongs to the SecB family. As to quaternary structure, homotetramer, a dimer of dimers. One homotetramer interacts with 1 SecA dimer.

The protein resides in the cytoplasm. Functionally, one of the proteins required for the normal export of preproteins out of the cell cytoplasm. It is a molecular chaperone that binds to a subset of precursor proteins, maintaining them in a translocation-competent state. It also specifically binds to its receptor SecA. This Azotobacter vinelandii (strain DJ / ATCC BAA-1303) protein is Protein-export protein SecB.